The primary structure comprises 164 residues: Phosphopantetheine adenylyltransferase (164 aa).

A substrate-binding site is contributed by Ser9. Residues 9-10 (SF) and His17 contribute to the ATP site. Lys41, Leu74, and Arg88 together coordinate substrate. Residues 89–91 (GIR), Glu99, and 124–130 (YAEVSST) each bind ATP.

Belongs to the bacterial CoaD family. As to quaternary structure, homohexamer. Requires Mg(2+) as cofactor.

The protein localises to the cytoplasm. The enzyme catalyses (R)-4'-phosphopantetheine + ATP + H(+) = 3'-dephospho-CoA + diphosphate. The protein operates within cofactor biosynthesis; coenzyme A biosynthesis; CoA from (R)-pantothenate: step 4/5. In terms of biological role, reversibly transfers an adenylyl group from ATP to 4'-phosphopantetheine, yielding dephospho-CoA (dPCoA) and pyrophosphate. The sequence is that of Phosphopantetheine adenylyltransferase from Chromobacterium violaceum (strain ATCC 12472 / DSM 30191 / JCM 1249 / CCUG 213 / NBRC 12614 / NCIMB 9131 / NCTC 9757 / MK).